The following is a 790-amino-acid chain: Protein sel-1 homolog 1 (790 aa).

The signal sequence occupies residues 1 to 21 (MQVRVRLSLLLLCAVLLGSAA). Positions 22–51 (ATSDDKTNQDDSLDSKSSLPTDESVKDHTT) are disordered. At 22–734 (ATSDDKTNQD…LFTQLDMDQL (713 aa)) the chain is on the lumenal side. The interval 23-733 (TSDDKTNQDD…DLFTQLDMDQ (711 aa)) is interaction with ERLEC1, OS9 and SYVN1. A Phosphoserine modification is found at Ser64. Residues 67 to 78 (AEVESLLQDEED) are compositionally biased toward acidic residues. The tract at residues 67-98 (AEVESLLQDEEDSSKTQEEEISFLESPNPSSK) is disordered. Residues 118-166 (AHGEPCHFPFLFLDKEYDECTSDGREDGRLWCATTYDYKTDEKWGFCET) enclose the Fibronectin type-II domain. Intrachain disulfides connect Cys123–Cys149 and Cys137–Cys164. Sel1-like repeat units lie at residues 179 to 214 (AEMIYQAGMKILNGSNRKSQKREAYRYLQKAAGMNH), 215 to 250 (TKALERVSYALLFGDYLTQNIQAAKEMFEKLTEEGS), 251 to 286 (PKGQTGLGFLYASGLGVNSSQAKALVYYTFGALGGN), 287 to 322 (LIAHMILGYRYWAGIGVLQSCESALTHYRLVANHVA), 369 to 405 (VQAQVGLGQLHLHGGRGVEQNHQRAFDYFNLAANAGN), 406 to 442 (SHAMAFLGKMYSEGSDIVPQSNETALHYFKKAADMGN), 443 to 478 (PVGQSGLGMAYLYGRGVQVNYDLALKYFQKAAEQGW), 479 to 514 (VDGQLQLGSMYYNGIGVKRDYKQALKYFNLASQGGH), and 515 to 550 (ILAFYNLAQMHASGTGVMRSCHTAVELFKNVCERGR). N-linked (GlcNAc...) asparagine glycans are attached at residues Asn191 and Asn213. Asn268 carries an N-linked (GlcNAc...) asparagine glycan. Positions 348–533 (NSGMLEEDLI…MHASGTGVMR (186 aa)) are important for homodimerization and oligomerization. N-linked (GlcNAc...) asparagine glycosylation occurs at Asn427. N-linked (GlcNAc...) asparagine glycosylation is present at Asn604. Sel1-like repeat units follow at residues 623 to 658 (TVARIKLGDYHFYGFGTDVDYETAFIHYRLASEQQH) and 660 to 695 (AQAMFNLGYMHEKGLGIKQDIHLAKRFYDMAAEASP). The interaction with SYVN1 stretch occupies residues 639-719 (TDVDYETAFI…VVYFLQYIRE (81 aa)). Positions 734–790 (LLGPEWDLYLMTIIALLLGTVIAYRQRQHQDIPVPRPPGPRPAPPQQEGPPEQQPPQ) are mediates retention in the endoplasmic reticulum. A helical transmembrane segment spans residues 735–755 (LGPEWDLYLMTIIALLLGTVI). Residues 756 to 790 (AYRQRQHQDIPVPRPPGPRPAPPQQEGPPEQQPPQ) lie on the Cytoplasmic side of the membrane. The interval 763-790 (QDIPVPRPPGPRPAPPQQEGPPEQQPPQ) is disordered. Residues 767-790 (VPRPPGPRPAPPQQEGPPEQQPPQ) are compositionally biased toward pro residues.

This sequence belongs to the sel-1 family. As to quaternary structure, homodimer and homooligomer. May form a complex with ERLEC1, HSPA5, OS9, and SYVN1. Interacts with FOXRED2 and EDEM1. Interacts with LPL and LMF1; may stabilize the complex formed by LPL and LMF1 and thereby promote the export of LPL dimers. Component of the HRD1 complex, which comprises at least SYNV1/HRD1, DERL1/2, FAM8A1, HERPUD1/HERP, OS9, SEL1L and UBE2J1. SYNV1 assembles with SEL1L and FAM8A1 through its transmembrane domains, but interaction with its cytoplasmic domain is required to confer stability to FAM8A1 and enhance recruitment of HERPUD1. The interaction with SYNV1/HRD1 is direct. Post-translationally, N-glycosylated. In terms of tissue distribution, highly expressed in pancreas, white adipose tissue, liver and spleen (at protein level). Detected in heart, brain, spleen, lung, liver, kidney and testis.

It is found in the endoplasmic reticulum membrane. Plays a role in the endoplasmic reticulum quality control (ERQC) system also called ER-associated degradation (ERAD) involved in ubiquitin-dependent degradation of misfolded endoplasmic reticulum proteins. Enhances SYVN1 stability. Plays a role in LPL maturation and secretion. Required for normal differentiation of the pancreas epithelium, and for normal exocrine function and survival of pancreatic cells. May play a role in Notch signaling. This Mus musculus (Mouse) protein is Protein sel-1 homolog 1 (Sel1l).